A 231-amino-acid polypeptide reads, in one-letter code: Probable septum site-determining protein MinC (231 aa).

The protein belongs to the MinC family. Interacts with MinD and FtsZ.

Cell division inhibitor that blocks the formation of polar Z ring septums. Rapidly oscillates between the poles of the cell to destabilize FtsZ filaments that have formed before they mature into polar Z rings. Prevents FtsZ polymerization. In Bradyrhizobium diazoefficiens (strain JCM 10833 / BCRC 13528 / IAM 13628 / NBRC 14792 / USDA 110), this protein is Probable septum site-determining protein MinC.